Consider the following 575-residue polypeptide: Carboxylesterase 5A (575 aa).

The signal sequence occupies residues 1 to 27 (MSGEWGHLGQTLIWAVWVLAAATEGPA). An N-linked (GlcNAc...) asparagine glycan is attached at asparagine 82. A disulfide bond links cysteine 94 and cysteine 121. Serine 226 acts as the Acyl-ester intermediate in catalysis. An intrachain disulfide couples cysteine 280 to cysteine 291. The N-linked (GlcNAc...) asparagine glycan is linked to asparagine 281. The active-site Charge relay system is the glutamate 345. Asparagine 363 is a glycosylation site (N-linked (GlcNAc...) asparagine). Catalysis depends on histidine 454, which acts as the Charge relay system. Asparagine 524 carries an N-linked (GlcNAc...) asparagine glycan.

This sequence belongs to the type-B carboxylesterase/lipase family. Post-translationally, N-glycosylated.

It localises to the secreted. It carries out the reaction a carboxylic ester + H2O = an alcohol + a carboxylate + H(+). Involved in the detoxification of xenobiotics and in the activation of ester and amide prodrugs. This Canis lupus familiaris (Dog) protein is Carboxylesterase 5A (CES5A).